A 169-amino-acid polypeptide reads, in one-letter code: Crossover junction endodeoxyribonuclease RuvC (169 aa).

Active-site residues include Asp15, Glu75, and Asp147. Asp15, Glu75, and Asp147 together coordinate Mg(2+).

This sequence belongs to the RuvC family. In terms of assembly, homodimer which binds Holliday junction (HJ) DNA. The HJ becomes 2-fold symmetrical on binding to RuvC with unstacked arms; it has a different conformation from HJ DNA in complex with RuvA. In the full resolvosome a probable DNA-RuvA(4)-RuvB(12)-RuvC(2) complex forms which resolves the HJ. Requires Mg(2+) as cofactor.

It localises to the cytoplasm. The enzyme catalyses Endonucleolytic cleavage at a junction such as a reciprocal single-stranded crossover between two homologous DNA duplexes (Holliday junction).. Functionally, the RuvA-RuvB-RuvC complex processes Holliday junction (HJ) DNA during genetic recombination and DNA repair. Endonuclease that resolves HJ intermediates. Cleaves cruciform DNA by making single-stranded nicks across the HJ at symmetrical positions within the homologous arms, yielding a 5'-phosphate and a 3'-hydroxyl group; requires a central core of homology in the junction. The consensus cleavage sequence is 5'-(A/T)TT(C/G)-3'. Cleavage occurs on the 3'-side of the TT dinucleotide at the point of strand exchange. HJ branch migration catalyzed by RuvA-RuvB allows RuvC to scan DNA until it finds its consensus sequence, where it cleaves and resolves the cruciform DNA. This is Crossover junction endodeoxyribonuclease RuvC from Caulobacter sp. (strain K31).